A 331-amino-acid polypeptide reads, in one-letter code: Putative serine/threonine-protein kinase ZK507.1 (331 aa).

The Protein kinase domain occupies 1–270; the sequence is MKVNEEGFAI…CKLTLKEPLV (270 aa). D116 functions as the Proton acceptor in the catalytic mechanism. Basic and acidic residues predominate over residues 302–314; sequence SDRNEENSLDRSK. The tract at residues 302 to 331 is disordered; that stretch reads SDRNEENSLDRSKTGTLSFNNSKNKKPSRY.

The protein belongs to the protein kinase superfamily. Ser/Thr protein kinase family.

It catalyses the reaction L-seryl-[protein] + ATP = O-phospho-L-seryl-[protein] + ADP + H(+). The enzyme catalyses L-threonyl-[protein] + ATP = O-phospho-L-threonyl-[protein] + ADP + H(+). This Caenorhabditis elegans protein is Putative serine/threonine-protein kinase ZK507.1.